The following is an 889-amino-acid chain: MAADVVGDVYVLVEHPFEYTGKDGRRVAIRPNERYRLLRRSTEHWWHVRREPGGRPFYLPAQYVRELPALGNPAAAAPPGPHPSPAAPEPLAYDYRFVSAAATAGPDGAPEESGGRASSLCGPAQRGAATQRSSLAPGLPACLYLRPAAPVRPAQSLNDLACAAVSPPAGLLGSSGSFKACSVAGSWVCPRPLARSDSENVYEVIQDLHVPPPEESAEQVDDPPEPVYANIERQPRATSPGAAAAPLPSPVWETHTDAGTGRPYYYNPDTGVTTWESPFEAAEGAASPATSPASVDSHVSLETEWGQYWDEESRRVFFYNPLTGETAWEDEAENEPEEELEMQPGLSPGSPGDPRPPTPETDYPESLTSYPEEDYSPVGSFGEPGPTSPLTTPPGWSCHVSQDKQMLYTNHFTQEQWVRLEDPHGKPYFYNPEDSSVRWELPQVPVPAPRSIHKSSQDGDTPAQASPPEEKVPAELDEVGSWEEVSPATAAVRTKTLDKAGVLHRTKTADKGKRLRKKHWSASWTVLEGGVLTFFKDSKTSAAGGLRQPSKFSTPEYTVELRGATLSWAPKDKSSRKNVLELRSRDGSEYLIQHDSEAIISTWHKAIAQGIQELSAELPPEESESSRVDFGSSERLGSWQEKEEDARPNAAAPALGPVGLESDLSKVRHKLRKFLQRRPTLQSLREKGYIKDQVFGCALAALCERERSRVPRFVQQCIRAVEARGLDIDGLYRISGNLATIQKLRYKVDHDERLDLDDGRWEDVHVITGALKLFFRELPEPLFPFSHFRQFIAAIKLQDQARRSRCVRDLVRSLPAPNHDTLRMLFQHLCRVIEHGEQNRMSVQSVAIVFGPTLLRPEVEETSMPMTMVFQNQVVELILQQCADIFPPH.

An SH3 domain is found at 6–69 (VGDVYVLVEH…PAQYVRELPA (64 aa)). A disordered region spans residues 104–132 (AGPDGAPEESGGRASSLCGPAQRGAATQR). Residues Ser-156, Ser-216, and Ser-249 each carry the phosphoserine modification. 2 consecutive WW domains span residues 246–280 (PLPSPVWETHTDAGTGRPYYYNPDTGVTTWESPFE) and 299–333 (VSLETEWGQYWDEESRRVFFYNPLTGETAWEDEAE). A compositionally biased stretch (acidic residues) spans 329-341 (EDEAENEPEEELE). The tract at residues 329 to 397 (EDEAENEPEE…SPLTTPPGWS (69 aa)) is disordered. A Phosphoserine modification is found at Ser-347. Positions 383 to 395 (EPGPTSPLTTPPG) are enriched in low complexity. The 34-residue stretch at 411–444 (HFTQEQWVRLEDPHGKPYFYNPEDSSVRWELPQV) folds into the WW 3 domain. Residues 447–474 (PAPRSIHKSSQDGDTPAQASPPEEKVPA) form a disordered region. Ser-456 is subject to Phosphoserine. Thr-461 bears the Phosphothreonine mark. Ser-466 is subject to Phosphoserine. The region spanning 496–612 (TLDKAGVLHR…WHKAIAQGIQ (117 aa)) is the PH domain. The tract at residues 617 to 655 (ELPPEESESSRVDFGSSERLGSWQEKEEDARPNAAAPAL) is disordered. In terms of domain architecture, Rho-GAP spans 697–886 (CALAALCERE…LILQQCADIF (190 aa)).

In terms of assembly, interacts with SH3KBP1/CIN85. As to expression, expressed in germinal center B-cell, spleen, chronic lymphocytic leukemia, pancreatic cancer and lung cancer.

It localises to the cytoplasm. It is found in the membrane. In terms of biological role, rho GTPase-activating protein which may be involved in clathrin-mediated endocytosis. GTPase activators for the Rho-type GTPases act by converting them to an inactive GDP-bound state. Has activity toward CDC42 and RAC1. The polypeptide is Rho GTPase-activating protein 27 (Homo sapiens (Human)).